Here is a 78-residue protein sequence, read N- to C-terminus: Conotoxin TsMEKL-P012 (78 aa).

An N-terminal signal peptide occupies residues 1 to 19 (MEKLTILLLLAAVLVLAQA). A propeptide spanning residues 20-38 (LIKKGGGEKRQKEKINFLS) is cleaved from the precursor. Cystine bridges form between C52–C66, C59–C70, and C65–C75.

The protein belongs to the conotoxin O2 superfamily. As to expression, expressed by the venom duct.

It localises to the secreted. The polypeptide is Conotoxin TsMEKL-P012 (Conus tessulatus (Tessellate cone)).